We begin with the raw amino-acid sequence, 699 residues long: Fervidolysin (699 aa).

The first 21 residues, 1 to 21 (MRKVLLIASIVALILALFSCA), serve as a signal peptide directing secretion. Residues 22–149 (NPSFEPRSKA…MYKIRKPGLN (128 aa)) constitute a propeptide that is removed on maturation. Glu157 is a binding site for Ca(2+). Residues 163-465 (LWGLEAIGVT…YGLVKLDAAL (303 aa)) enclose the Peptidase S8 domain. The Charge relay system role is filled by Asp190. Asp199 is a Ca(2+) binding site. The Charge relay system role is filled by His228. Residues Lys239, Asp241, Lys243, and Ile245 each coordinate Ca(2+). Ser409 functions as the Charge relay system in the catalytic mechanism.

Belongs to the peptidase S8 family. Post-translationally, undergoes auto-proteolytic processing. Once cleaved, the propeptide can remain associated with the protease and blocks its activity. The physiological activation of fervidolysin is proposed to be achieved through the stepwise removal of the propeptide accomplished by several proteolytic cleavages that may not be autolytic.

The protein resides in the cell surface. With respect to regulation, is inhibited by phenylmethylsulfonyl fluoride and 3,4-dichloroisocoumarin. EDTA and iodoacetate (1 to 5 mM) have only little effect on the enzyme activity. Protease able to degrade keratin into peptides. Is responsible for keratinolysis by F.pennivorans, which allows this bacterium to grow on native feathers. The sequence is that of Fervidolysin from Fervidobacterium pennivorans.